Here is a 451-residue protein sequence, read N- to C-terminus: Signal transduction histidine-protein kinase ArlS (451 aa).

2 helical membrane-spanning segments follow: residues 11 to 31 (IIVT…IIIF) and 156 to 176 (IIAL…SYVF). The HAMP domain occupies 178 to 231 (TQITKPLVSLSNKMIEIRRDGFQNKLQLNTNYEEIDNLANTFNEMMSQIEESFN). A Histidine kinase domain is found at 239–451 (DASHELRTPL…NKGTTFKIIF (213 aa)). Histidine 242 is subject to Phosphohistidine; by autocatalysis.

Autophosphorylated.

It localises to the cell membrane. The catalysed reaction is ATP + protein L-histidine = ADP + protein N-phospho-L-histidine.. Member of the two-component regulatory system ArlS/ArlR involved in the regulation of adhesion, autolysis, multidrug resistance and virulence. ArlS probably functions as a sensor protein kinase which is autophosphorylated at a histidine residue and transfers its phosphate group to ArlR. The sequence is that of Signal transduction histidine-protein kinase ArlS (arlS) from Staphylococcus aureus (strain USA300).